The sequence spans 426 residues: RuvB-like protein 1 (426 aa).

An ATP-binding site is contributed by 62–69 (GPVGSGKT).

The protein belongs to the RuvB family. As to quaternary structure, component of the SWR1 chromatin remodeling complex, the INO80 chromatin remodeling complex, and of the R2TP complex.

It is found in the nucleus. The catalysed reaction is ATP + H2O = ADP + phosphate + H(+). Its function is as follows. DNA helicase which participates in several chromatin remodeling complexes, including the SWR1 and the INO80 complexes. The SWR1 complex mediates the ATP-dependent exchange of histone H2A for the H2A variant HZT1 leading to transcriptional regulation of selected genes by chromatin remodeling. The INO80 complex remodels chromatin by shifting nucleosomes and is involved in DNA repair. Also involved in pre-rRNA processing. This is RuvB-like protein 1 (RVB1) from Encephalitozoon cuniculi (strain GB-M1) (Microsporidian parasite).